The chain runs to 176 residues: Conjugal transfer protein TraF (176 aa).

Positions 1-23 are cleaved as a signal peptide; it reads MRHRRALLFLTGAAVFVSALTAA.

Belongs to the peptidase S26C family.

It is found in the periplasm. Involved in conjugal transfer of the plasmid. The sequence is that of Conjugal transfer protein TraF (traF) from Agrobacterium tumefaciens (strain 15955).